A 71-amino-acid chain; its full sequence is Large ribosomal subunit protein bL31 (71 aa).

Zn(2+)-binding residues include cysteine 16, cysteine 18, cysteine 36, and cysteine 39.

This sequence belongs to the bacterial ribosomal protein bL31 family. Type A subfamily. As to quaternary structure, part of the 50S ribosomal subunit. Requires Zn(2+) as cofactor.

Its function is as follows. Binds the 23S rRNA. The polypeptide is Large ribosomal subunit protein bL31 (Syntrophus aciditrophicus (strain SB)).